The following is a 452-amino-acid chain: Probable 1,4-beta-D-glucan cellobiohydrolase A (452 aa).

The signal sequence occupies residues 1 to 17 (MHQRALLFSALAVAANA). N81 carries an N-linked (GlcNAc...) asparagine glycan. The active-site Nucleophile is E226. E231 functions as the Proton donor in the catalytic mechanism. N284 is a glycosylation site (N-linked (GlcNAc...) asparagine). The disordered stretch occupies residues 406 to 432 (DPSKPGVARGTCEHGAGDPEKVESQHP). The span at 416–431 (TCEHGAGDPEKVESQH) shows a compositional bias: basic and acidic residues.

The protein belongs to the glycosyl hydrolase 7 (cellulase C) family.

The protein resides in the secreted. It catalyses the reaction Hydrolysis of (1-&gt;4)-beta-D-glucosidic linkages in cellulose and cellotetraose, releasing cellobiose from the non-reducing ends of the chains.. In terms of biological role, the biological conversion of cellulose to glucose generally requires three types of hydrolytic enzymes: (1) Endoglucanases which cut internal beta-1,4-glucosidic bonds; (2) Exocellobiohydrolases that cut the disaccharide cellobiose from the non-reducing end of the cellulose polymer chain; (3) Beta-1,4-glucosidases which hydrolyze the cellobiose and other short cello-oligosaccharides to glucose. The protein is Probable 1,4-beta-D-glucan cellobiohydrolase A (cbhA) of Neosartorya fischeri (strain ATCC 1020 / DSM 3700 / CBS 544.65 / FGSC A1164 / JCM 1740 / NRRL 181 / WB 181) (Aspergillus fischerianus).